Reading from the N-terminus, the 485-residue chain is Probable coniferyl aldehyde dehydrogenase (485 aa).

Active-site residues include glutamate 226 and cysteine 260.

Belongs to the aldehyde dehydrogenase family.

It carries out the reaction (E)-coniferaldehyde + NADP(+) + H2O = (E)-ferulate + NADPH + 2 H(+). The enzyme catalyses (E)-coniferaldehyde + NAD(+) + H2O = (E)-ferulate + NADH + 2 H(+). In Caulobacter vibrioides (strain ATCC 19089 / CIP 103742 / CB 15) (Caulobacter crescentus), this protein is Probable coniferyl aldehyde dehydrogenase (calB).